The sequence spans 205 residues: Small ribosomal subunit protein uS4 (205 aa).

Residues 1–12 (MSKRVQAKHKLD) are compositionally biased toward basic residues. Positions 1 to 49 (MSKRVQAKHKLDRRMGQNIWGRPKSPVNRREYGPGQHGQRRKGKMSDFG) are disordered. The S4 RNA-binding domain maps to 94-155 (RRLDAVVYRS…ASRQLEIVVV (62 aa)).

This sequence belongs to the universal ribosomal protein uS4 family. In terms of assembly, part of the 30S ribosomal subunit. Contacts protein S5. The interaction surface between S4 and S5 is involved in control of translational fidelity.

One of the primary rRNA binding proteins, it binds directly to 16S rRNA where it nucleates assembly of the body of the 30S subunit. In terms of biological role, with S5 and S12 plays an important role in translational accuracy. In Methylorubrum extorquens (strain CM4 / NCIMB 13688) (Methylobacterium extorquens), this protein is Small ribosomal subunit protein uS4.